Here is a 769-residue protein sequence, read N- to C-terminus: Sensor histidine kinase ComP (769 aa).

Over 1 to 9 the chain is Cytoplasmic; sequence MKNLIKKFT. Residues 10–33 traverse the membrane as a helical segment; it reads IAVIVLSILYISYTTYISMNGIII. Topologically, residues 34–113 are extracellular; the sequence is GTKIHKNDKS…DFDLVTLNRP (80 aa). The chain crosses the membrane as a helical span at residues 114–134; that stretch reads YSFFLFVLPLFFYFLSIICIF. Residues 135-144 lie on the Cytoplasmic side of the membrane; it reads YILKVNKKRR. A helical transmembrane segment spans residues 145–167; the sequence is SFAAYILILLLLDISIAYISAGG. At 168 to 235 the chain is on the extracellular side; sequence PFRGHIINRY…QDYLQVDIDF (68 aa). A helical transmembrane segment spans residues 236–257; sequence LATLNLVSFATLTLFSFSAIYL. The Cytoplasmic segment spans residues 258–272; it reads HLNKYKYAEHSFILK. A helical membrane pass occupies residues 273–295; sequence LLILTNTLSFAPFLIFFVLPIIF. The Extracellular portion of the chain corresponds to 296-299; sequence TGNY. The helical transmembrane segment at 300–323 threads the bilayer; the sequence is IFPALASASLLVLIPFGLVYQFVA. Residues 324–337 are Cytoplasmic-facing; that stretch reads NKMFDIEFILGRMR. A helical membrane pass occupies residues 338 to 357; the sequence is YYALLAMIPTLLIVGALVLF. At 358-361 the chain is on the extracellular side; that stretch reads DVMD. The chain crosses the membrane as a helical span at residues 362-383; it reads IQMNPVRQTVFFFVVMFAVFYF. At 384 to 769 the chain is on the cytoplasmic side; it reads KEVMDFKFRL…GFKADIEIEL (386 aa). A Histidine kinase domain is found at 571 to 769; the sequence is LARDLHDSVL…GFKADIEIEL (199 aa). His-576 is modified (phosphohistidine; by autocatalysis).

Post-translationally, autophosphorylates on a histidine and transfers the phosphate group onto an aspartate in ComA, thus activating it.

It localises to the cell membrane. It catalyses the reaction ATP + protein L-histidine = ADP + protein N-phospho-L-histidine.. Functionally, sensor in the two-component regulatory system ComP/ComA involved in a major quorum response pathway that regulates the development of genetic competence. Plays a role in sporulation, at least partly interchangeable with that of SpoIIJ. Probably activates ComA by phosphorylation. The protein is Sensor histidine kinase ComP (comP) of Bacillus subtilis (strain 168).